A 320-amino-acid polypeptide reads, in one-letter code: N-acetylneuraminate lyase (320 aa).

Positions 51 and 52 each coordinate aceneuramate. The active-site Proton donor is tyrosine 143. Residue lysine 173 is the Schiff-base intermediate with substrate of the active site. Aceneuramate-binding residues include threonine 175, glycine 199, aspartate 201, glutamate 202, and serine 218. Residue serine 308 is modified to Phosphoserine.

The protein belongs to the DapA family. NanA subfamily. In terms of assembly, homotetramer.

It localises to the cytoplasm. The catalysed reaction is aceneuramate = aldehydo-N-acetyl-D-mannosamine + pyruvate. The protein operates within amino-sugar metabolism; N-acetylneuraminate degradation. Catalyzes the cleavage of N-acetylneuraminic acid (sialic acid) to form pyruvate and N-acetylmannosamine via a Schiff base intermediate. It prevents sialic acids from being recycled and returning to the cell surface. Involved in the N-glycolylneuraminic acid (Neu5Gc) degradation pathway. In Mus musculus (Mouse), this protein is N-acetylneuraminate lyase.